Reading from the N-terminus, the 228-residue chain is Death domain-containing membrane protein NRADD (228 aa).

At 1–52 the chain is on the extracellular side; the sequence is MLYNVSKGVVYSDTALQGQDGDREGMWVGAGGALAPNTSSLFPPEPPGASSN. 2 N-linked (GlcNAc...) asparagine glycosylation sites follow: Asn-4 and Asn-37. Residues 53-73 form a helical; Signal-anchor for type III membrane protein membrane-spanning segment; the sequence is IIPVYCALLATVILGLLAYVA. Over 74–228 the chain is Cytoplasmic; sequence FKCWRSHKQR…SSPAESSSVV (155 aa). The tract at residues 87–122 is disordered; sequence AKARTVELGDPDRDQRRGDSNVFVDSPPSLEPCIPS. Basic and acidic residues predominate over residues 90–105; the sequence is RTVELGDPDRDQRRGD. A Death domain is found at 143 to 222; the sequence is EEVQRLLMMG…DVVQVLSSPA (80 aa).

In terms of assembly, interacts with NGFR. Interacts with NTRK1. Interacts with SORT1. Detected in lung and testis.

The protein resides in the cell membrane. It localises to the nucleus. Functionally, modulates NTRK1 signaling. Can activate several intracellular signaling pathways, leading to activation of JUN. Promotes apoptosis. Promotes translocation of SORT1 to the cell membrane, and thereby hinders lysosomal degradation of SOTR1 and promotes its interaction with NGFR. This is Death domain-containing membrane protein NRADD (Nradd) from Mus musculus (Mouse).